Reading from the N-terminus, the 277-residue chain is Release factor glutamine methyltransferase (277 aa).

S-adenosyl-L-methionine is bound by residues 117 to 121 (GTGTG), D140, W168, and N183. 183–186 (NPPY) is a binding site for substrate.

It belongs to the protein N5-glutamine methyltransferase family. PrmC subfamily.

The enzyme catalyses L-glutaminyl-[peptide chain release factor] + S-adenosyl-L-methionine = N(5)-methyl-L-glutaminyl-[peptide chain release factor] + S-adenosyl-L-homocysteine + H(+). Functionally, methylates the class 1 translation termination release factors RF1/PrfA and RF2/PrfB on the glutamine residue of the universally conserved GGQ motif. The sequence is that of Release factor glutamine methyltransferase from Shigella dysenteriae serotype 1 (strain Sd197).